Reading from the N-terminus, the 320-residue chain is ATP synthase gamma chain (320 aa).

Belongs to the ATPase gamma chain family. F-type ATPases have 2 components, CF(1) - the catalytic core - and CF(0) - the membrane proton channel. CF(1) has five subunits: alpha(3), beta(3), gamma(1), delta(1), epsilon(1). CF(0) has three main subunits: a, b and c.

It is found in the cell membrane. Produces ATP from ADP in the presence of a proton gradient across the membrane. The gamma chain is believed to be important in regulating ATPase activity and the flow of protons through the CF(0) complex. The polypeptide is ATP synthase gamma chain (Lactobacillus delbrueckii subsp. bulgaricus (strain ATCC 11842 / DSM 20081 / BCRC 10696 / JCM 1002 / NBRC 13953 / NCIMB 11778 / NCTC 12712 / WDCM 00102 / Lb 14)).